A 302-amino-acid polypeptide reads, in one-letter code: Zinc transporter ZIP1 (302 aa).

Over 1-6 (MDYLLQ) the chain is Extracellular. A helical transmembrane segment spans residues 7-27 (VKVGALVGLLLLTLFFGFIPA). Residues 28–44 (RMKWFHVTGGTELHKAV) are Cytoplasmic-facing. A helical transmembrane segment spans residues 45 to 65 (LSFVSCFAGGVFLSACLLDII). The Extracellular segment spans residues 66–86 (PDYLSDIHGELQKRDLDDGFP). The chain crosses the membrane as a helical span at residues 87-107 (LPEFIMACGFFTVLILEKMVL). The Cytoplasmic segment spans residues 108 to 158 (SCTEGHRNEETAPLLAPAAPNGHAHGHPSVNDLEGSGHHVHVDFHAHSSFR). The chain crosses the membrane as a helical span at residues 159–179 (SFMLFLSLSLHSVFEGLAIGL). At 180-185 (QTTNAK) the chain is on the extracellular side. A helical transmembrane segment spans residues 186–206 (VLEICIAILVHKSIIVFSLSV). The Cytoplasmic segment spans residues 207–219 (KLVQSAVKPLWVV). The chain crosses the membrane as a helical span at residues 220 to 240 (LYVTVFAIMSPLGIGIGIVVI). At 241–247 (ETERQAG) the chain is on the extracellular side. The chain crosses the membrane as a helical span at residues 248–268 (GLIQAVLEGLAAGTFIYITFL). At 269 to 281 (EILPHELNSSERP) the chain is on the cytoplasmic side. Residues 282–302 (LLKVLFLLCGFSIMAALCFLG) form a helical membrane-spanning segment.

The protein belongs to the ZIP transporter (TC 2.A.5) family. Ubiquitous. Highest levels in ovary, high levels in heart, eye, kidney and brain, moderate levels in intestine and low levels in gill and skin.

The protein resides in the cell membrane. It localises to the endoplasmic reticulum membrane. The catalysed reaction is Zn(2+)(in) = Zn(2+)(out). Functionally, transporter for the divalent cation Zn(2+). Mediates the influx of Zn(2+) into cells from extracellular space. This is Zinc transporter ZIP1 (slc39a1) from Danio rerio (Zebrafish).